A 222-amino-acid polypeptide reads, in one-letter code: MSDVFEGYERQYCELSTNLSRKCHSASVLSNGEEKKGKIAEIKSGIDEADVLIRKMDLEARSLQPSAKAVCLSKLREYKSDLNQLKKEFKRVSSADAKPSSREELMESGMADLHAVSADQRGRLAMSVERLDQSSDRIRESRRLMLETEEVGISIVQDLSQQRQTLLHAHNKLHGVDDAIDKSKKVLTAMSRRMTRNKWIITSVIVALVLAIILIISYKLSH.

S2 bears the N-acetylserine mark. Residues 2-199 lie on the Cytoplasmic side of the membrane; the sequence is SDVFEGYERQ…MSRRMTRNKW (198 aa). Residues 68-95 are a coiled coil; that stretch reads KAVCLSKLREYKSDLNQLKKEFKRVSSA. Residues 200–220 form a helical; Anchor for type IV membrane protein membrane-spanning segment; sequence IITSVIVALVLAIILIISYKL. Residues 221–222 are Vesicular-facing; it reads SH.

Belongs to the VTI1 family. As to quaternary structure, forms SNARE complexes with the t-SNAREs SYP61 and either SYP41 or SYP42, and with a much lower affinity with SYP51 in the TGN. Also interacts with VPS45, a Sec1 protein, but not with SYP21 or SYP22. Binds to EPSIN2. Core constituent of the SNARE complex required for membrane fusion at the trans-Golgi network. Interacts with SCYL2B. Expressed in roots, stems, flowers and leaves.

Its subcellular location is the golgi apparatus. It localises to the trans-Golgi network membrane. It is found in the prevacuolar compartment membrane. The protein localises to the cell membrane. Together with either SYP41 or SYP61, required for membrane fusion; the fusion of phospholipid vesicles containing SYP41 or SYP61 and VTI12 is triggered by YKT61 and YKT62. Functions as a v-SNARE responsible for the docking or fusion of transport vesicles within the trans-Golgi network (TGN) and mediates liposome fusion. Necessary to deliver proteins to the protein storage vacuole (PSV). May be also involved in retrograde traffic to the cis-Golgi. The polypeptide is Vesicle transport v-SNARE 12 (Arabidopsis thaliana (Mouse-ear cress)).